A 347-amino-acid chain; its full sequence is N-acetyl-gamma-glutamyl-phosphate reductase (347 aa).

Cys150 is a catalytic residue.

The protein belongs to the NAGSA dehydrogenase family. Type 1 subfamily.

It localises to the cytoplasm. It catalyses the reaction N-acetyl-L-glutamate 5-semialdehyde + phosphate + NADP(+) = N-acetyl-L-glutamyl 5-phosphate + NADPH + H(+). It functions in the pathway amino-acid biosynthesis; L-arginine biosynthesis; N(2)-acetyl-L-ornithine from L-glutamate: step 3/4. Catalyzes the NADPH-dependent reduction of N-acetyl-5-glutamyl phosphate to yield N-acetyl-L-glutamate 5-semialdehyde. The polypeptide is N-acetyl-gamma-glutamyl-phosphate reductase (Halothermothrix orenii (strain H 168 / OCM 544 / DSM 9562)).